The chain runs to 611 residues: MSQAGVDRLLRGLQLLLLVLRLSAGYFPEERWNPESSLRNPTVLIALLARNSEGSLPEVLGALDTLHYPKERISLWVATDHNLDNTTEILREWLINVQNQYHHVEWRPQEHPRWFKDEEGPKHWSHSRYEYIMKLRQAALTSAREMWADYIFFLDADNLLTNPETLNLLIAENKTVVAPMLDSRAAYSNFWCGMTTQGYYRRTPAYMPIRRRERRGCFPVPMVHSTFLIDLRKEASQQLNFYPPHADYTWAFDDIIVFAFSCRQADVQMFLCNKEIYGHLPVPLRSHGTLLDEADNFVHTKLEVMVKGPPLNLSSFVTIPEKVPDKMSFDEVFLINLKHRQDRRERMKRTLYELQIDYKLVDAVYGKTLNQTQVSELGIKMLPDYKDPYHGRPLTRGEMGCFLSHYNIWKEISERNLAVSAVFEDDLRFEIYFKRRLQTLLHDLETAKLDWDLIYLGRKRMQVDEPEEPVPGVRNLVVSDYSYWTLGYLISLRGAKKLLNAEPLVKMLPVDEFLPVMYDKHPISDYSSHFSPRDLLAFSVEPLLLYPTHYTGDEGYISDTETSVLWDNLTEPTDWDRAKSRKTQQQEKLRSEALNSPSLGSPFDNTARDEL.

An N-terminal signal peptide occupies residues 1–24 (MSQAGVDRLLRGLQLLLLVLRLSA). Residues asparagine 85, asparagine 173, asparagine 312, asparagine 370, and asparagine 568 are each glycosylated (N-linked (GlcNAc...) asparagine). Positions 575-591 (WDRAKSRKTQQQEKLRS) are enriched in basic and acidic residues. Residues 575–611 (WDRAKSRKTQQQEKLRSEALNSPSLGSPFDNTARDEL) form a disordered region. The short motif at 608–611 (RDEL) is the Prevents secretion from ER element.

This sequence belongs to the glycosyltransferase 25 family.

The protein resides in the endoplasmic reticulum lumen. The catalysed reaction is (5R)-5-hydroxy-L-lysyl-[collagen] + UDP-alpha-D-galactose = (5R)-5-O-(beta-D-galactosyl)-5-hydroxy-L-lysyl-[collagen] + UDP + H(+). Beta-galactosyltransferase that transfers beta-galactose to hydroxylysine residues of type I collagen. By acting on collagen glycosylation, facilitates the formation of collagen triple helix. In Xenopus laevis (African clawed frog), this protein is Procollagen galactosyltransferase 1-A (colgalt1-a).